A 572-amino-acid polypeptide reads, in one-letter code: Urocanate hydratase (572 aa).

NAD(+) contacts are provided by residues 48-49, Q126, 172-174, D192, 238-239, 259-263, 268-269, and Y317; these read GG, GMG, NA, QTSAH, and YL. Residue C405 is part of the active site. G487 serves as a coordination point for NAD(+). Residues 550–559 show a composition bias toward basic and acidic residues; it reads EGDEAHEGDA. The segment at 550 to 572 is disordered; sequence EGDEAHEGDAAHGSGAAREGDGV.

The protein belongs to the urocanase family. The cofactor is NAD(+).

The protein localises to the cytoplasm. It carries out the reaction 4-imidazolone-5-propanoate = trans-urocanate + H2O. It participates in amino-acid degradation; L-histidine degradation into L-glutamate; N-formimidoyl-L-glutamate from L-histidine: step 2/3. Functionally, catalyzes the conversion of urocanate to 4-imidazolone-5-propionate. The polypeptide is Urocanate hydratase (Streptomyces coelicolor (strain ATCC BAA-471 / A3(2) / M145)).